The primary structure comprises 312 residues: Putative electron transfer flavoprotein subunit YdiR (312 aa).

254–282 (LYLTLGISGQIQHMVGGNGAKVIVAINKD) provides a ligand contact to FAD.

The protein belongs to the ETF alpha-subunit/FixB family. In terms of assembly, ydiR and YdiQ form a heterodimer.

May play a role in a redox process. The protein is Putative electron transfer flavoprotein subunit YdiR (ydiR) of Escherichia coli (strain K12).